Consider the following 140-residue polypeptide: MSASLIRRGLELLEAPGQGKAPPALQQGRDGTRPAGTARRRKVTAGPGKNKATIKGRVVKSAIEEYHKKKAVNHLKANLLYMTSGRCVADKAVTQQVLTQNRGRKSKDRPAEKKEKKKPEGTVFTEEDFRKFEREYFGIP.

Disordered regions lie at residues 1–52 (MSAS…KNKA) and 95–123 (QQVL…EGTV). The segment covering 108-120 (DRPAEKKEKKKPE) has biased composition (basic and acidic residues).

Belongs to the AROS family. In terms of assembly, part of the small subunit (SSU) processome, composed of more than 70 proteins and the RNA chaperone small nucleolar RNA (snoRNA) U3.

Its subcellular location is the nucleus. It localises to the nucleolus. Its function is as follows. Part of the small subunit (SSU) processome, first precursor of the small eukaryotic ribosomal subunit. During the assembly of the SSU processome in the nucleolus, many ribosome biogenesis factors, an RNA chaperone and ribosomal proteins associate with the nascent pre-rRNA and work in concert to generate RNA folding, modifications, rearrangements and cleavage as well as targeted degradation of pre-ribosomal RNA by the RNA exosome. Acts as a chaperone that specifically mediates the integration of RPS19 in state post-A1. Direct regulator of SIRT1. The sequence is that of Active regulator of SIRT1 (RPS19BP1) from Gallus gallus (Chicken).